The primary structure comprises 693 residues: tRNA (guanine(27)-N(2))-dimethyltransferase (693 aa).

The short motif at 95 to 99 is the Nucleolar localization signal element; that stretch reads HKLRR. A C2H2-type zinc finger spans residues 144-166; sequence YHCIICSATITRRTDMLGHVRRH. Residues 187 to 648 enclose the Trm1 methyltransferase domain; sequence EILKEADTDV…APLMQFKSIL (462 aa). S-adenosyl-L-methionine contacts are provided by arginine 220, aspartate 267, aspartate 317, and alanine 318. Zn(2+)-binding residues include cysteine 448, cysteine 451, cysteine 473, and cysteine 475. A Glycyl lysine isopeptide (Lys-Gly) (interchain with G-Cter in SUMO2) cross-link involves residue lysine 545. A phosphoserine mark is found at serine 572 and serine 667.

It belongs to the class I-like SAM-binding methyltransferase superfamily. Trm1 family.

The protein localises to the nucleus. Its subcellular location is the nucleolus. It catalyses the reaction guanosine(27) in tRNA(Tyr) + 2 S-adenosyl-L-methionine = N(2)-dimethylguanosine(27) in tRNA(Tyr) + 2 S-adenosyl-L-homocysteine + 2 H(+). Specifically dimethylates a single guanine residue at position 27 of tRNA(Tyr) using S-adenosyl-L-methionine as donor of the methyl groups. Dimethylation at position 27 of tRNA(Tyr) is required for efficient translation of tyrosine codons. Also required to maintain 3-(3-amino-3-carboxypropyl)uridine (acp3U) in the D-loop of several cytoplasmic tRNAs. The protein is tRNA (guanine(27)-N(2))-dimethyltransferase (TRMT1L) of Macaca fascicularis (Crab-eating macaque).